Consider the following 294-residue polypeptide: tRNA dimethylallyltransferase (294 aa).

10–17 (GPTAVGKT) serves as a coordination point for ATP. 12–17 (TAVGKT) provides a ligand contact to substrate. Residues 35–38 (DSQQ) are interaction with substrate tRNA.

This sequence belongs to the IPP transferase family. In terms of assembly, monomer. Mg(2+) is required as a cofactor.

The enzyme catalyses adenosine(37) in tRNA + dimethylallyl diphosphate = N(6)-dimethylallyladenosine(37) in tRNA + diphosphate. Catalyzes the transfer of a dimethylallyl group onto the adenine at position 37 in tRNAs that read codons beginning with uridine, leading to the formation of N6-(dimethylallyl)adenosine (i(6)A). The polypeptide is tRNA dimethylallyltransferase (Streptococcus gordonii (strain Challis / ATCC 35105 / BCRC 15272 / CH1 / DL1 / V288)).